We begin with the raw amino-acid sequence, 998 residues long: SEC23-interacting protein (998 aa).

The tract at residues 1-363 (MADRKANGGG…YTEEFSEKLE (363 aa)) is interaction with SEC23A. The segment at 50-246 (LPGEDSTDVG…AQQQVPARPA (197 aa)) is disordered. The segment covering 54 to 63 (DSTDVGEEDS) has biased composition (acidic residues). The segment covering 65–78 (LGQTSTHTSTPQTF) has biased composition (polar residues). Residues 79-88 (SYFSQVSSSS) are compositionally biased toward low complexity. Polar residues-rich tracts occupy residues 94 to 108 (IGQS…SAGQ), 143 to 158 (PPSQ…SQPS), and 232 to 241 (AMQSPAQQQV). The residue at position 600 (Ser600) is a Phosphoserine. The 64-residue stretch at 640 to 703 (EEPLTLHGTL…NFVKLKAAKL (64 aa)) folds into the SAM domain. The interval 720 to 742 (TKGQDESAPKTKEMASPSSESNE) is disordered. Over residues 722 to 732 (GQDESAPKTKE) the composition is skewed to basic and acidic residues. A phosphoserine mark is found at Ser735, Ser748, and Ser924. Positions 777–987 (LDFEPEIFFA…ALLLLKEIYR (211 aa)) constitute a DDHD domain.

The protein belongs to the PA-PLA1 family. In terms of assembly, interacts with SEC23A.

It localises to the cytoplasmic vesicle. The protein localises to the COPII-coated vesicle membrane. Its subcellular location is the endoplasmic reticulum. In terms of biological role, plays a role in the organization of endoplasmic reticulum exit sites. Specifically binds to phosphatidylinositol 3-phosphate (PI(3)P), phosphatidylinositol 4-phosphate (PI(4)P) and phosphatidylinositol 5-phosphate (PI(5)P). This Mus musculus (Mouse) protein is SEC23-interacting protein (Sec23ip).